The following is a 169-amino-acid chain: Large ribosomal subunit protein uL10 (169 aa).

Belongs to the universal ribosomal protein uL10 family. In terms of assembly, part of the ribosomal stalk of the 50S ribosomal subunit. The N-terminus interacts with L11 and the large rRNA to form the base of the stalk. The C-terminus forms an elongated spine to which L12 dimers bind in a sequential fashion forming a multimeric L10(L12)X complex.

Its function is as follows. Forms part of the ribosomal stalk, playing a central role in the interaction of the ribosome with GTP-bound translation factors. In Rickettsia bellii (strain OSU 85-389), this protein is Large ribosomal subunit protein uL10.